The sequence spans 847 residues: MVISSNAFIVGRVGELDLITAGWHFLQRTMNNEDRRGFEKMISMPGFCVKKFEETYLLKRVNPFAQTEEGRIIKFNSSDCPCGKSQDVHNISAMKDQLSNFLDKWENVHEKFSLPTGSSELTTSKTPIDVDTKEQENRLKQKAEAAPKSTPIENHKKNIQALCKQNAVAEQCLWNVYHVSGKPAEKKEQRNDMDRNISGVSVKDYETLKNFEDKSPPQAENASSSKKDEPISVECTDETSSRLSPATDISHEMAEHGTPDSGMISDVSEIKVLPAGKIEKKLIKELNPEMMVGRDGRRYRQKLREAEKQATVEFKLENFEQTNGEAQSVENDILTGKEKRRLKDKLRKEKKEQSKLFVEKDLEKNKESSSASLSTNKLAESPTEADKNSNVIHTNIKPKDICIETEYPANNDNKKKSEVMFSSTVTNVFGRNENQTSFDVKEHTVDSFELLPGEYRISNFGQQMADTTSAEMTALGKMPQEAGEVKPTVREHSGANFLQRERNFPLSLKTTVIANSPEGDIEGKRLSKGQKRRARNKANKGVYVVNENGSHSIELLPGEYKLLELDENKKIQEFPIDTRHYMRDDQTGGGSKIVEQGQRTKKKKNFYVAGNLSKNILDNGKWLAYVIDDKNSDGVPRVGEVSTEEVQETIKLLDSKISHNAIQDNSCSEDFEFGSSSSTNFVTGSSRSLLPELDADFVRKTLADYEENATEDAAENNNEVFESASEELEMFMNSEGIAPNFHSEFAKKTSPLLVGNAEFKDFCSKYSNSKYDNKTISKLVKKYIDTRIVHHYERFKKLADRESHRIAKSWTKIYETSSYSLMVMLYTNSPSSSVGFSDLEEILFNDR.

The span at 116–126 (TGSSELTTSKT) shows a compositional bias: polar residues. Disordered stretches follow at residues 116–153 (TGSS…TPIE), 208–245 (LKNF…RLSP), and 361–392 (DLEK…SNVI). Residues 128–145 (IDVDTKEQENRLKQKAEA) show a composition bias toward basic and acidic residues. The segment covering 368 to 378 (SSSASLSTNKL) has biased composition (polar residues).

This is an uncharacterized protein from Caenorhabditis elegans.